A 167-amino-acid polypeptide reads, in one-letter code: Protein-export protein SecB (167 aa).

The protein belongs to the SecB family. In terms of assembly, homotetramer, a dimer of dimers. One homotetramer interacts with 1 SecA dimer.

The protein localises to the cytoplasm. Functionally, one of the proteins required for the normal export of preproteins out of the cell cytoplasm. It is a molecular chaperone that binds to a subset of precursor proteins, maintaining them in a translocation-competent state. It also specifically binds to its receptor SecA. This is Protein-export protein SecB from Wolbachia pipientis wMel.